A 132-amino-acid polypeptide reads, in one-letter code: Small ribosomal subunit protein uS11 (132 aa).

Belongs to the universal ribosomal protein uS11 family. Part of the 30S ribosomal subunit. Interacts with proteins S7 and S18. Binds to IF-3.

Functionally, located on the platform of the 30S subunit, it bridges several disparate RNA helices of the 16S rRNA. Forms part of the Shine-Dalgarno cleft in the 70S ribosome. In Clostridium botulinum (strain 657 / Type Ba4), this protein is Small ribosomal subunit protein uS11.